Reading from the N-terminus, the 112-residue chain is S-adenosylmethionine decarboxylase proenzyme (112 aa).

Catalysis depends on S62, which acts as the Schiff-base intermediate with substrate; via pyruvic acid. Residue S62 is modified to Pyruvic acid (Ser); by autocatalysis. Catalysis depends on H67, which acts as the Proton acceptor; for processing activity. Catalysis depends on C82, which acts as the Proton donor; for catalytic activity.

Belongs to the prokaryotic AdoMetDC family. Type 1 subfamily. In terms of assembly, heterotetramer of two alpha and two beta chains arranged as a dimer of alpha/beta heterodimers. Pyruvate serves as cofactor. In terms of processing, is synthesized initially as an inactive proenzyme. Formation of the active enzyme involves a self-maturation process in which the active site pyruvoyl group is generated from an internal serine residue via an autocatalytic post-translational modification. Two non-identical subunits are generated from the proenzyme in this reaction, and the pyruvate is formed at the N-terminus of the alpha chain, which is derived from the carboxyl end of the proenzyme. The post-translation cleavage follows an unusual pathway, termed non-hydrolytic serinolysis, in which the side chain hydroxyl group of the serine supplies its oxygen atom to form the C-terminus of the beta chain, while the remainder of the serine residue undergoes an oxidative deamination to produce ammonia and the pyruvoyl group blocking the N-terminus of the alpha chain.

The catalysed reaction is S-adenosyl-L-methionine + H(+) = S-adenosyl 3-(methylsulfanyl)propylamine + CO2. It participates in amine and polyamine biosynthesis; S-adenosylmethioninamine biosynthesis; S-adenosylmethioninamine from S-adenosyl-L-methionine: step 1/1. Functionally, catalyzes the decarboxylation of S-adenosylmethionine to S-adenosylmethioninamine (dcAdoMet), the propylamine donor required for the synthesis of the polyamines spermine and spermidine from the diamine putrescine. This Archaeoglobus fulgidus (strain ATCC 49558 / DSM 4304 / JCM 9628 / NBRC 100126 / VC-16) protein is S-adenosylmethionine decarboxylase proenzyme.